The sequence spans 506 residues: MHRSDSTMWLKYGLSPPTRSPNAALCAAAATKCASMTRPSCVLDSLTLYSPAWPCLCRYAIFPCRAWAIYVRAGNFILTKFSRFSFCFCVWSPRPPIAAAANHPATSTIVARSQGLRGQDFNFLFVDEANFIKPGAMHTIMGFLNQTNCKLFFVSSTNTGQSSTSLLYNLKGSSNSLLNVVTYICDDHLPEVQQRQNVTTCSCYVLQKPVYVTMDHSVRNTAELFVKDSFMNEIAGGQVGNTLSARSVIASRAMDQFLVYRPSTSNSPNVHNLSRVLTAYIDPAFTANRSASGTGIALVTELNGATVLLGMEHFYLEALTGEAAAEIAQCANLCVAYTCLLHPGVFREVRVAVEGNSSQDSATAIALRLADLLAPLQKRLGFSLVFAHTRQHGSSVAHPFYLLNKQKSRAFDLFISRFNSGNIMASQELVSNTVLLGNDPCEYLVEQIKNLEIVITSGDANRVYSGKQGGKLADDVLVAVVMAAYLSFEGAPPAGYHTVSGAVCRR.

Residue glutamate 128 is the For ATPase activity of the active site. Catalysis depends on for nuclease activity residues aspartate 282, glutamate 354, and aspartate 475.

It belongs to the herpesviridae TRM3 protein family. Interacts with the terminase subunits TRM1 and TRM2. Interacts with portal protein.

It localises to the host nucleus. In terms of biological role, component of the molecular motor that translocates viral genomic DNA in empty capsid during DNA packaging. Forms a tripartite terminase complex together with TRM1 and TRM2 in the host cytoplasm. Once the complex reaches the host nucleus, it interacts with the capsid portal vertex. This portal forms a ring in which genomic DNA is translocated into the capsid. TRM3 carries an RNase H-like nuclease activity that plays an important role for the cleavage of concatemeric viral DNA into unit length genomes. The protein is Tripartite terminase subunit 3 of Amazona oratrix (yellow-headed parrot).